The following is a 248-amino-acid chain: Acetylglutamate kinase (248 aa).

Residues 41 to 42 (GG), arginine 63, and asparagine 155 contribute to the substrate site.

Belongs to the acetylglutamate kinase family. ArgB subfamily.

It is found in the cytoplasm. It catalyses the reaction N-acetyl-L-glutamate + ATP = N-acetyl-L-glutamyl 5-phosphate + ADP. Its pathway is amino-acid biosynthesis; L-arginine biosynthesis; N(2)-acetyl-L-ornithine from L-glutamate: step 2/4. In terms of biological role, catalyzes the ATP-dependent phosphorylation of N-acetyl-L-glutamate. The sequence is that of Acetylglutamate kinase from Lactiplantibacillus plantarum (strain ATCC BAA-793 / NCIMB 8826 / WCFS1) (Lactobacillus plantarum).